We begin with the raw amino-acid sequence, 479 residues long: Ribosomal RNA small subunit methyltransferase F (479 aa).

Residues 125-131, E149, D176, and D194 each bind S-adenosyl-L-methionine; that span reads AAAPGSK. C247 serves as the catalytic Nucleophile.

The protein belongs to the class I-like SAM-binding methyltransferase superfamily. RsmB/NOP family.

Its subcellular location is the cytoplasm. The enzyme catalyses cytidine(1407) in 16S rRNA + S-adenosyl-L-methionine = 5-methylcytidine(1407) in 16S rRNA + S-adenosyl-L-homocysteine + H(+). Its function is as follows. Specifically methylates the cytosine at position 1407 (m5C1407) of 16S rRNA. The sequence is that of Ribosomal RNA small subunit methyltransferase F from Salmonella enteritidis PT4 (strain P125109).